A 919-amino-acid chain; its full sequence is Chaperone protein ClpC2, chloroplastic (919 aa).

The N-terminal 54 residues, 1–54 (MAGTLLQPVALGTTFAGRVSGQRWKSHGTRRPPSMLAMSLSRPVKMAAFVGLRS), are a transit peptide targeting the chloroplast. Residues 89–231 (FERFTEKAIK…RTQVIRMIGE (143 aa)) form the Clp R domain. 2 repeat regions span residues 92–157 (FTEK…IGRG) and 167–231 (FTPR…MIGE). An i region spans residues 252–499 (LEEYGTNLTK…RVRLRHAQVP (248 aa)). Residue 297–304 (GEPGVGKT) coordinates ATP. Positions 506–541 (DKELKQITKDKNEAVRSQDFEKAGELRDREMELKAQ) constitute a UVR domain. An II region spans residues 566–757 (VNEADIQHIV…LLIMTSNVGS (192 aa)). 640–647 (GPTGVGKS) is a binding site for ATP.

It belongs to the ClpA/ClpB family. ClpC subfamily.

The protein localises to the plastid. It is found in the chloroplast. In terms of biological role, molecular chaperone that may interact with a ClpP-like protease involved in degradation of denatured proteins in the chloroplast. The sequence is that of Chaperone protein ClpC2, chloroplastic (CLPC2) from Oryza sativa subsp. japonica (Rice).